A 152-amino-acid polypeptide reads, in one-letter code: MRDIKAIESVVADGLANQGYEVVDLIVQNQGSKKLFQFFVDKEGGINLDDVEKASRLIDSIIEMENLIEGAYILEASSPGIKRVLKKPEHFKKFIGQRAKITLKQMIENRANFTGLIAGANETEMTLDDGTTQFKFKYEDIKKANLDPVLEF.

This sequence belongs to the RimP family.

The protein localises to the cytoplasm. Required for maturation of 30S ribosomal subunits. This chain is Ribosome maturation factor RimP, found in Elusimicrobium minutum (strain Pei191).